Here is an 822-residue protein sequence, read N- to C-terminus: ATP-dependent zinc metalloprotease FTSH 7, chloroplastic (822 aa).

3 stretches are compositionally biased toward low complexity: residues 1–34 (MASASAAAETLAAASLPVASPSRSLLRPLPRRAS), 80–94 (AEASGPGEASSSSSG), and 101–122 (AAAAAEAGGDGASTSTTSAAAT). Disordered stretches follow at residues 1–44 (MASA…ASVR) and 67–136 (PAAR…ENKW). Residues 1-70 (MASASAAAET…RVLRRPPAAR (70 aa)) constitute a chloroplast transit peptide. The next 2 helical transmembrane spans lie at 154 to 174 (IVQGREMGFLLLQLGFAIFAL) and 288 to 308 (GGLLNSALVALIYVVLIAVVL). 386-393 (GLPGTGKT) lines the ATP pocket. Residue His611 participates in Zn(2+) binding. Residue Glu612 is part of the active site. Zn(2+)-binding residues include His615 and Asp694.

It in the N-terminal section; belongs to the AAA ATPase family. In the C-terminal section; belongs to the peptidase M41 family. It depends on Zn(2+) as a cofactor.

It localises to the plastid. The protein localises to the chloroplast thylakoid membrane. In terms of biological role, probable ATP-dependent zinc metallopeptidase. The chain is ATP-dependent zinc metalloprotease FTSH 7, chloroplastic (FTSH7) from Oryza sativa subsp. japonica (Rice).